The primary structure comprises 77 residues: Putative neurotoxin 1 (77 aa).

The first 25 residues, 1–25 (MKAFIAILSIAIVLLLIVSIKETSA), serve as a signal peptide directing secretion. A propeptide spanning residues 26–46 (KDCKQECVKRYTKGDLTNFLK) is cleaved from the precursor.

The protein belongs to the scolopendra neurotoxin 3 family. Contains 2 disulfide bonds. In terms of tissue distribution, expressed by the venom gland.

It localises to the secreted. This chain is Putative neurotoxin 1, found in Scolopendra mutilans (Chinese red-headed centipede).